The sequence spans 367 residues: Germination protease (367 aa).

A propeptide spanning residues 1-13 is cleaved from the precursor; that stretch reads MEEQQIPFQVRTD. The tract at residues 267 to 287 is disordered; sequence KDDPSKSLTPAGMSFGNRKLT.

Belongs to the peptidase A25 family. In terms of assembly, homotetramer. Post-translationally, autoproteolytically processed. The inactive tetrameric zymogen termed p46 autoprocesses to a smaller form termed p41, which is active only during spore germination.

The catalysed reaction is Endopeptidase action with P4 Glu or Asp, P1 preferably Glu &gt; Asp, P1' hydrophobic and P2' Ala.. Functionally, initiates the rapid degradation of small, acid-soluble proteins during spore germination. This chain is Germination protease, found in Oceanobacillus iheyensis (strain DSM 14371 / CIP 107618 / JCM 11309 / KCTC 3954 / HTE831).